Reading from the N-terminus, the 537-residue chain is Apoptosis inhibitor 5-like protein API5 (537 aa).

An ARM-like and Heat-like helical repeats region spans residues 9–363 (AEVERLYELG…TTNSLCGYKI (355 aa)). Positions 465-537 (WMEQPKKPAP…GGRGRGWGYR (73 aa)) are disordered. Residues 474-492 (PTTTGGKRSQPATNGNTPA) are compositionally biased toward polar residues.

Belongs to the API5 family. As to quaternary structure, interacts with AIP1 and AIP2.

Its subcellular location is the nucleus. Its function is as follows. Putative anti-apoptotic factor involved in the regulation of tapetal programmed cell death (PCD) and degeneration during anther development. Interacts directly with the DEAD-box ATP-dependent RNA helicases AIP1 and AIP2 that form dimers and bind the promoter region of the cysteine protease CP1 involved in tapetum PCD. This is Apoptosis inhibitor 5-like protein API5 from Oryza sativa subsp. japonica (Rice).